Consider the following 148-residue polypeptide: Large ribosomal subunit protein bL9 (148 aa).

The protein belongs to the bacterial ribosomal protein bL9 family.

In terms of biological role, binds to the 23S rRNA. The protein is Large ribosomal subunit protein bL9 of Listeria welshimeri serovar 6b (strain ATCC 35897 / DSM 20650 / CCUG 15529 / CIP 8149 / NCTC 11857 / SLCC 5334 / V8).